The sequence spans 95 residues: Co-chaperonin GroES (95 aa).

The protein belongs to the GroES chaperonin family. In terms of assembly, heptamer of 7 subunits arranged in a ring. Interacts with the chaperonin GroEL.

Its subcellular location is the cytoplasm. Functionally, together with the chaperonin GroEL, plays an essential role in assisting protein folding. The GroEL-GroES system forms a nano-cage that allows encapsulation of the non-native substrate proteins and provides a physical environment optimized to promote and accelerate protein folding. GroES binds to the apical surface of the GroEL ring, thereby capping the opening of the GroEL channel. This chain is Co-chaperonin GroES, found in Rickettsia prowazekii (strain Madrid E).